Consider the following 170-residue polypeptide: Ribosome maturation factor RimM (170 aa).

The PRC barrel domain maps to 98 to 170 (PDEYYWVDLE…LIVVDWDPDF (73 aa)).

Belongs to the RimM family. In terms of assembly, binds ribosomal protein uS19.

The protein resides in the cytoplasm. Functionally, an accessory protein needed during the final step in the assembly of 30S ribosomal subunit, possibly for assembly of the head region. Essential for efficient processing of 16S rRNA. May be needed both before and after RbfA during the maturation of 16S rRNA. It has affinity for free ribosomal 30S subunits but not for 70S ribosomes. This Xanthomonas oryzae pv. oryzae (strain MAFF 311018) protein is Ribosome maturation factor RimM.